The following is a 480-amino-acid chain: MDGGGGGDAFGSATAPLAWHDFLERMRQPSAADFVKSIKGFIVTFSNRAPDPEHDSAAVQEFLENMEGAFRAHTPWAGSSEEELESAGEGLEKYVMTKLFNRVFASVPEDVKSDEELFEKMSLLQQFIRPENLDIKPEYQSETSWLLAQKELQKINMYKAPRDKLACILNCCKVINNLLLNASIVSNENPPGADEFLPVLIYVTIKANPPQLHSNLLYIQRYRRQSRLVSEAQYFFTNILSAESFIWNIDGESLSMDERDFQKKMDLARERMLGLSASSENQDNQNNLDVREQKSQTLKASRDSDVNLSLKDNFQGPGLEMRRDSDASSNPVERVQSISDLEKKGAAELLKDDDLNKKIQEYPFLFARSGDLTVADVENLLNSYKQLVLKYVALSQGMGINLENPPVQSMQTVSDLVESEEPKNVKNAVNFSEGSSKTSDDIKNDTLYSEVDNTGTQQTAVDPSYQKAQQDEASDQPEHA.

One can recognise a VPS9 domain in the interval 111–255 (VKSDEELFEK…IWNIDGESLS (145 aa)). Residues asparagine 189 and aspartate 194 each coordinate GTP. The segment covering 276-288 (SASSENQDNQNNL) has biased composition (polar residues). Disordered regions lie at residues 276–338 (SASS…VQSI) and 418–480 (ESEE…PEHA). Positions 289–305 (DVREQKSQTLKASRDSD) are enriched in basic and acidic residues. 3 stretches are compositionally biased toward polar residues: residues 327–338 (ASSNPVERVQSI), 427–437 (NAVNFSEGSSK), and 451–461 (VDNTGTQQTAV).

Interacts with RAB5A. Interacts with GPA3 (via C-terminus).

It is found in the cytoplasm. It localises to the golgi apparatus. The protein resides in the trans-Golgi network. The protein localises to the prevacuolar compartment. Its function is as follows. Functions as a guanine nucleotide exchange factor (GEF) for Rab small GTPases. Activates specifically RAB5A protein. Functions cooperatively with RAB5A to regulate post-Golgi dense vesicle-mediated transport of storage proteins to the type II protein bodies (PBII) protein storage vacuoles in developing endosperm. This Oryza sativa subsp. japonica (Rice) protein is Vacuolar protein sorting-associated protein 9A.